The primary structure comprises 532 residues: Protein tweety homolog 2 (532 aa).

The Extracellular segment spans residues 1 to 44 (MPAARVEYIAPWWVVWLHSVPHLGLRLQRVDSTFSPGDETYQES). Residues 45–65 (LLFLGVLAAIGLGLNLIFLTV) traverse the membrane as a helical segment. At 66–87 (YLVCTCCCRRDHTVQTKQQESC) the chain is on the cytoplasmic side. A helical membrane pass occupies residues 88 to 108 (CVTWTAVVAGLLCCAAVGVGF). Residues 109–213 (YGNSETNDGM…QTAYVEYYRW (105 aa)) are Extracellular-facing. Residues E113 and D116 each coordinate Ca(2+). A glycan (N-linked (GlcNAc...) asparagine) is linked at N129. Residues 164–166 (RGD) carry the RGD motif. T199 carries the phosphothreonine modification. A helical transmembrane segment spans residues 214–234 (LSYLLLFILDLVICLVTCLGL). Residues 235–240 (ARRSKC) are Cytoplasmic-facing. The helical transmembrane segment at 241-261 (LLASMLCCGILTLILSWASLA) threads the bilayer. Residues 262–385 (ADAAAAVGTS…DALTGICYDG (124 aa)) are Extracellular-facing. 2 disulfides stabilise this stretch: C274–C382 and C300–C367. N283 and N352 each carry an N-linked (GlcNAc...) asparagine glycan. Residues 386-406 (IEGLLFLGLFSLLAALAFSTL) traverse the membrane as a helical segment. At 407–532 (TCAGPRAWKY…EHLRHYEFPS (126 aa)) the chain is on the cytoplasmic side. Position 504 is a phosphoserine (S504). The short motif at 506-509 (PPTY) is the PY-motif; mediates interaction with NEDD4L element.

Belongs to the tweety family. In terms of assembly, forms cis-homodimers in the presence of Ca(+2) and forms monomers and trans-dimers in the absence of Ca(2+). Interacts with NEDD4L. In terms of processing, ubiquitinated by NEDD4L, leading to its proteasomal degradation.

The protein resides in the cell membrane. The catalysed reaction is chloride(in) = chloride(out). It catalyses the reaction L-glutamate(out) = L-glutamate(in). Inhibited by (4-[(2-butyl-6,7-dichloro-2- cyclopentyl-2,3-dihydro-1-oxo-1H-inden-5-yl)oxy]butanoic acid). Calcium-independent, swelling-dependent volume-regulated anion channel (VRAC-swell) which plays a pivotal role in the process of regulatory volume decrease (RVD) in the brain through the efflux of anions like chloride and organic osmolytes like glutamate. Probable large-conductance Ca(2+)-activated chloride channel. The polypeptide is Protein tweety homolog 2 (Ttyh2) (Mus musculus (Mouse)).